A 589-amino-acid chain; its full sequence is 5'-AMP-activated protein kinase catalytic subunit alpha-1 (589 aa).

One can recognise a Protein kinase domain in the interval 24 to 276 (FVIKETIGKG…VKRIVNHSWF (253 aa)). ATP is bound by residues 30–38 (IGKGAFGAV) and lysine 53. Aspartate 147 serves as the catalytic Proton acceptor.

The protein belongs to the protein kinase superfamily. CAMK Ser/Thr protein kinase family. SNF1 subfamily.

The enzyme catalyses L-seryl-[protein] + ATP = O-phospho-L-seryl-[protein] + ADP + H(+). The catalysed reaction is L-threonyl-[protein] + ATP = O-phospho-L-threonyl-[protein] + ADP + H(+). Probably does not act as a sensor that couples lifespan to information about energy levels and insulin-like signals. Together with aak-2, involved in the establishment of germline stem cell (GSC) quiescence during dauer development. Plays a role in the maintenance of glycogen stores which are necessary for resistance to hyperosmotic stress. The chain is 5'-AMP-activated protein kinase catalytic subunit alpha-1 (aak-1) from Caenorhabditis elegans.